Reading from the N-terminus, the 212-residue chain is High frequency lysogenization protein HflD homolog (212 aa).

It belongs to the HflD family.

The protein resides in the cytoplasm. It localises to the cell inner membrane. This chain is High frequency lysogenization protein HflD homolog, found in Stutzerimonas stutzeri (strain A1501) (Pseudomonas stutzeri).